The sequence spans 245 residues: Probable ABC transporter ATP-binding protein p29 (245 aa).

An ABC transporter domain is found at Leu7–Asn245. Gly39–Ser46 contributes to the ATP binding site.

The protein belongs to the ABC transporter superfamily.

Its function is as follows. Part of a high-affinity transport system. The protein is Probable ABC transporter ATP-binding protein p29 (p29) of Mycoplasma genitalium (strain ATCC 33530 / DSM 19775 / NCTC 10195 / G37) (Mycoplasmoides genitalium).